We begin with the raw amino-acid sequence, 1280 residues long: Rho guanine nucleotide exchange factor 10-like protein (1280 aa).

Positions 1-10 (MASSNPPPQP) are enriched in pro residues. Positions 1–94 (MASSNPPPQP…TEAPTVVSNG (94 aa)) are disordered. Acidic residues predominate over residues 26–46 (EVEEDSGEAFEFDDSDEEEDT). Ser40 carries the post-translational modification Phosphoserine. The span at 78-89 (PAAAPPQTEAPT) shows a compositional bias: low complexity. Tyr131 and Tyr152 each carry phosphotyrosine. The disordered stretch occupies residues 161-202 (PRETEDLGWSSSEFESYSEDSGEETKPEAEPTKHRGSFQPKL). Basic and acidic residues predominate over residues 183–193 (EETKPEAEPTK). Ser279 bears the Phosphoserine mark. The region spanning 314-501 (VRRHILGSIV…ETLAEKLNEQ (188 aa)) is the DH domain. Disordered stretches follow at residues 1133–1163 (QEEAEGPQAEEDKPDGQAHETVPGPDSHTAR) and 1186–1207 (PLLSVREPAPADGSALEHSEED).

Interacts with RHOA, RHOB and RHOC.

The protein resides in the cytoplasm. Functionally, acts as a guanine nucleotide exchange factor (GEF) for RHOA, RHOB and RHOC. This Mus musculus (Mouse) protein is Rho guanine nucleotide exchange factor 10-like protein (Arhgef10l).